Consider the following 456-residue polypeptide: Cytochrome c biogenesis protein CcsB (456 aa).

Transmembrane regions (helical) follow at residues 29-49 (LRLA…GTVI), 88-108 (AGWF…CTFR), and 174-194 (VGPI…IWGS).

Belongs to the Ccs1/CcsB family. May interact with CcsA.

It is found in the cellular thylakoid membrane. Functionally, required during biogenesis of c-type cytochromes (cytochrome c6 and cytochrome f) at the step of heme attachment. The sequence is that of Cytochrome c biogenesis protein CcsB from Synechococcus sp. (strain ATCC 27144 / PCC 6301 / SAUG 1402/1) (Anacystis nidulans).